The following is an 809-amino-acid chain: MGCLCPGLTLPVSCLILVWAAGSGSVKVLRLTACFSDYISASTCEWKMDRPTNCSAQLRLSYQLNDEFSDNLTCIPENREDEVCVCRMLMDNIVSEDVYELDLWAGNQLLWNSSFKPSRHVKPRAPQNLTVHAISHTWLLTWSNPYPLKNHLWSELTYLVNISKEDDPTDFKIYNVTYMDPTLRVTASTLKSRATYSARVKARAQNYNSTWSEWSPSTTWHNYYEQPLEQRLPLGVSISCVVILAICLSCYFSIIKIKKEWWDQIPNPAHSPLVAIVLQDSQVSLWGKQSRGQEPAKCPRWKTCLTKLLPCLLEHGLQKEEDSSKTVRNGPFQSPGKSAWHTVEVNHTILRPEIISVVPCVELCEAQVESEEEEVEEDRGSFCPSPESSGSGFQEGREGVAARLTESLFLGLLGAENGALGESCLLPPLGSAHMPWARISSAGPQEAASQGEEQPLNPESNPLATLTQSPGSLAFTEAPAVVADNPAYRSFSNSLSQPRGPGELDSDPQLAEHLGQVDPSIPSAPQPSEPPTALQPEPETWEQMLRQSVLQQGAAPAPASAPTGGYREFAQVVKQGGGAAGSGPSGEAGYKAFSSLLAGSAVCPGQSGVEASSGEGGYRPYESPDPGAPAPVPVPLFTFGLDVEPPHSPQNSLLPGGSPELPGPEPTVKGEDPRKPLLSAQQATDSLRDDLGSGIVYSALTCHLCGHLKQCHGQEEHGEAHTVASPCCGCCCGDRSSPPVSPVRALDPPPGGVPLEAGLSLASLGSLGLSEERKPSLFFQPAPGNAQSSSQTPLTVAMLSTGPTCTSAS.

The first 25 residues, 1-25 (MGCLCPGLTLPVSCLILVWAAGSGS), serve as a signal peptide directing secretion. Topologically, residues 26–231 (VKVLRLTACF…NYYEQPLEQR (206 aa)) are extracellular. Cys-34 and Cys-44 are oxidised to a cystine. N-linked (GlcNAc...) asparagine glycans are attached at residues Asn-53 and Asn-71. A disulfide bridge connects residues Cys-74 and Cys-86. 3 N-linked (GlcNAc...) asparagine glycosylation sites follow: Asn-112, Asn-128, and Asn-161. Residues 125-222 (APQNLTVHAI…EWSPSTTWHN (98 aa)) form the Fibronectin type-III domain. A Phosphoserine modification is found at Ser-163. 2 N-linked (GlcNAc...) asparagine glycosylation sites follow: Asn-175 and Asn-208. The short motif at 211 to 215 (WSEWS) is the WSXWS motif element. Residues 232–255 (LPLGVSISCVVILAICLSCYFSII) traverse the membrane as a helical segment. Residues 256 to 809 (KIKKEWWDQI…STGPTCTSAS (554 aa)) lie on the Cytoplasmic side of the membrane. The Box 1 motif signature appears at 261–269 (WWDQIPNPA). Disordered stretches follow at residues 369 to 397 (ESEE…QEGR) and 441 to 468 (SAGP…TLTQ). Over residues 447 to 468 (AASQGEEQPLNPESNPLATLTQ) the composition is skewed to polar residues. Tyr-488 carries the post-translational modification Phosphotyrosine. The segment at 514-536 (LGQVDPSIPSAPQPSEPPTALQP) is disordered. A phosphotyrosine mark is found at Tyr-566, Tyr-590, and Tyr-618. The interval 606–674 (QSGVEASSGE…EPTVKGEDPR (69 aa)) is disordered. Positions 695-700 (IVYSAL) match the ITIM motif motif.

This sequence belongs to the type I cytokine receptor family. Type 4 subfamily. In terms of assembly, the functional IL4 receptor is formed by initial binding of IL4 to IL4R. Subsequent recruitment to the complex of the common gamma chain, in immune cells, creates a type I receptor and, in non-immune cells, of IL13RA1 forms a type II receptor. IL4R can also interact with the IL13/IL13RA1 complex to form a similar type II receptor. Interacts with PIK3C3. Interacts with the SH2-containing phosphatases, PTPN6/SHIP1, PTPN11/SHIP2 and INPP5D/SHIP. Interacts with JAK1 through a Box 1-containing region; inhibited by SOCS5. Interacts with SOCS5; inhibits IL4 signaling. Interacts with JAK3. Interacts with CLM1. Interacts with IL13RA2. Post-translationally, on IL4 binding, phosphorylated on tyrosine residues in the cytoplasmic domain.

Its subcellular location is the cell membrane. The protein resides in the secreted. Receptor for both interleukin 4 and interleukin 13. Couples to the JAK1/2/3-STAT6 pathway. The IL4 response is involved in promoting Th2 differentiation. The IL4/IL13 responses are involved in regulating IgE production and, chemokine and mucus production at sites of allergic inflammation. In certain cell types, can signal through activation of insulin receptor substrates, IRS1/IRS2. In Equus caballus (Horse), this protein is Interleukin-4 receptor subunit alpha (IL4R).